The primary structure comprises 292 residues: Protease HtpX (292 aa).

2 helical membrane-spanning segments follow: residues 5–25 (IFLF…VMSV) and 34–54 (SGLL…SLLL). Position 140 (His-140) interacts with Zn(2+). Residue Glu-141 is part of the active site. Residue His-144 coordinates Zn(2+). A run of 2 helical transmembrane segments spans residues 155-175 (LLQG…GGII) and 193-213 (IIVF…AMWF). Glu-218 contributes to the Zn(2+) binding site.

It belongs to the peptidase M48B family. The cofactor is Zn(2+).

The protein localises to the cell inner membrane. This Xanthomonas oryzae pv. oryzae (strain PXO99A) protein is Protease HtpX.